The chain runs to 333 residues: Cilia- and flagella-associated protein 119 (333 aa).

Polar residues predominate over residues 1 to 10 (MITPSSSQSL). Disordered stretches follow at residues 1-70 (MITP…ANLF) and 309-333 (RLSS…TKTK). Ser34 is modified (phosphoserine). Residues 44–58 (TDMQTESPAEATSSP) show a composition bias toward polar residues. Residues 284–319 (IKSQLSKELRQLQQLVEERLKESEERLSSKLAALEQ) are a coiled coil.

Its subcellular location is the cell projection. It localises to the cilium. The protein localises to the flagellum. It is found in the cytoplasmic vesicle. The protein resides in the secretory vesicle. Its subcellular location is the acrosome. It localises to the cytoplasm. The chain is Cilia- and flagella-associated protein 119 from Mus musculus (Mouse).